A 136-amino-acid polypeptide reads, in one-letter code: MNSQIKNKAVYWGTGRRKTSVARVRLIPGNGQIKINGRSGDDYLNFNPSHLNSVKAPLQTLGLENSYDIFVNVFGGGLTGQADAIKQGAARALCDLSPDNRKPLKTEGHLSRDPRAKERRKYGLKKARKAPQFSKR.

Positions 96–136 (LSPDNRKPLKTEGHLSRDPRAKERRKYGLKKARKAPQFSKR) are disordered. The span at 98–116 (PDNRKPLKTEGHLSRDPRA) shows a compositional bias: basic and acidic residues. The segment covering 117–136 (KERRKYGLKKARKAPQFSKR) has biased composition (basic residues).

This sequence belongs to the universal ribosomal protein uS9 family.

The protein is Small ribosomal subunit protein uS9 of Prochlorococcus marinus (strain MIT 9515).